Here is a 507-residue protein sequence, read N- to C-terminus: MFS-type transporter acdC (507 aa).

Positions 1 to 50 (MSPNAPAVDIGAAPSLDTPEGDTKQPAEDHVEKDSNLVDWDGPDDPEHPQ) are disordered. Residues 21 to 36 (GDTKQPAEDHVEKDSN) show a composition bias toward basic and acidic residues. Asn-51 carries an N-linked (GlcNAc...) asparagine glycan. Residues 58–78 (WGITFSLASMTMWITFSSSVL) traverse the membrane as a helical segment. N-linked (GlcNAc...) asparagine glycosylation is present at Asn-90. 5 helical membrane-spanning segments follow: residues 95–115 (VMPLATTLVIFGFALGPLCWA), 125–145 (LPTFLGYGVFAIFQVPVAVAP), 155–175 (FFVGVFGSSALSVGPGVMADI), 186–206 (PFFFAANLLGPILGPIIGGFI), and 215–235 (WTAWLTLITSIFFGVLALLIV). N-linked (GlcNAc...) asparagine glycosylation is present at Asn-257. Helical transmembrane passes span 290–310 (PILICFTVYLSLIYGILYLFL), 328–348 (IAGLPFLGILVGMVLGIGIII), 371–391 (LVEMMLTSITMPIGLFWFGWA), 395–415 (HWMVQTIAGVPLGIGLFVLFM), 442–462 (FLGGSFPLFATAMYHNLGVDW), and 466–486 (ILGFISVAMVPIPFAFYIFGA).

The protein belongs to the major facilitator superfamily. CAR1 family.

The protein localises to the membrane. In terms of biological role, MFS-type transporter; part of the gene cluster that mediates the biosynthesis of aspcandine, a pyrrolobenzazepine alkaloid. This Aspergillus candidus protein is MFS-type transporter acdC.